A 677-amino-acid polypeptide reads, in one-letter code: Pannexin-2 (677 aa).

Over 11–47 the chain is Cytoplasmic; sequence MATALLAGEKLRELILPGAQDDKAGALAALLLQLKLE. The helical transmembrane segment at 48–70 threads the bilayer; the sequence is LPFDRVVTIGTVLVPILLVTLVF. Residues 71–123 lie on the Extracellular side of the membrane; sequence TKNFAEEPIYCYTPHNFTRDQALYARGYCWTELRDALPGVDASLWPSLFEHKF. Residue Asn86 is glycosylated (N-linked (GlcNAc...) asparagine). The chain crosses the membrane as a helical span at residues 124 to 146; the sequence is LPYALLAFAAIMYVPALGWEFLA. At 147 to 226 the chain is on the cytoplasmic side; sequence STRLTSELNF…RGRSNFLAKL (80 aa). A helical membrane pass occupies residues 227-249; it reads YLARHVLILLLSAVPISYLCTYY. Over 250–292 the chain is Extracellular; the sequence is ATQKQNEFTCALGASPDGAAGAGPAVRVSCKLPSVQLQRIIAG. Residues 293–315 traverse the membrane as a helical segment; it reads VDIVLLCVMNLIILVNLIHLFIF. Residues 316–643 lie on the Cytoplasmic side of the membrane; the sequence is RKSNFIFDKL…AREEEDGGPR (328 aa). Disordered regions lie at residues 393–423 and 454–510; these read ATPT…PPVV and NSKA…KKHA. Pro residues predominate over residues 492 to 504; the sequence is GPGPAPAPAPPPA. Ser593 carries the post-translational modification Phosphoserine.

Belongs to the pannexin family. In terms of assembly, homoheptameric. Post-translationally, S-palmitoylated in neural stem and progenitor cells. In terms of processing, cleaved by CASP3 and CASP7 during apoptosis. Cleavage has no effect on it function.

It localises to the cell membrane. The protein resides in the golgi apparatus membrane. The protein localises to the endoplasmic reticulum membrane. It carries out the reaction ATP(in) = ATP(out). The catalysed reaction is chloride(in) = chloride(out). It catalyses the reaction iodide(out) = iodide(in). The enzyme catalyses Na(+)(in) = Na(+)(out). It carries out the reaction D-gluconate(in) = D-gluconate(out). Functionally, ion channel with a slight anion preference. Also able to release ATP. Plays a role in regulating neurogenesis and apoptosis in keratinocytes. This chain is Pannexin-2, found in Homo sapiens (Human).